We begin with the raw amino-acid sequence, 87 residues long: Small ribosomal subunit protein bS18 (87 aa).

Belongs to the bacterial ribosomal protein bS18 family. As to quaternary structure, part of the 30S ribosomal subunit. Forms a tight heterodimer with protein bS6.

Its function is as follows. Binds as a heterodimer with protein bS6 to the central domain of the 16S rRNA, where it helps stabilize the platform of the 30S subunit. The protein is Small ribosomal subunit protein bS18 of Campylobacter hominis (strain ATCC BAA-381 / DSM 21671 / CCUG 45161 / LMG 19568 / NCTC 13146 / CH001A).